The sequence spans 689 residues: Methionine--tRNA ligase (689 aa).

The 'HIGH' region signature appears at 15–25 (PYANGPIHLGH). Residues Cys-146, Cys-149, Cys-159, and Cys-162 each contribute to the Zn(2+) site. A 'KMSKS' region motif is present at residues 332–336 (KMSKS). Lys-335 serves as a coordination point for ATP. Residues 546–577 (KDNLQPTEAPKADKKADKKVEKKATTGDPLTD) are disordered. The span at 555-570 (PKADKKADKKVEKKAT) shows a compositional bias: basic and acidic residues. Positions 588–689 (DFAKLDLRIA…QGAKPGMRVK (102 aa)) constitute a tRNA-binding domain.

The protein belongs to the class-I aminoacyl-tRNA synthetase family. MetG type 1 subfamily. In terms of assembly, homodimer. Zn(2+) serves as cofactor.

It localises to the cytoplasm. The catalysed reaction is tRNA(Met) + L-methionine + ATP = L-methionyl-tRNA(Met) + AMP + diphosphate. In terms of biological role, is required not only for elongation of protein synthesis but also for the initiation of all mRNA translation through initiator tRNA(fMet) aminoacylation. In Shewanella denitrificans (strain OS217 / ATCC BAA-1090 / DSM 15013), this protein is Methionine--tRNA ligase.